Consider the following 162-residue polypeptide: MGMVSKRKKMHYGDTHLQRRWRVRNRRRDLDQIDDDLQTRSGELINQNVDLDKPGFAQFYCVHCAKYFIDDTAMQAHFRTKVHKRRLKALEIEPYSIEEAERAAGRGSFVKPKKRAMETQPSKEDVVAGKRIRVEVVPEDTDATDSPSTSKTKRKKVEKMET.

A C2H2-type zinc finger spans residues 59-83 (FYCVHCAKYFIDDTAMQAHFRTKVH). A disordered region spans residues 110-162 (VKPKKRAMETQPSKEDVVAGKRIRVEVVPEDTDATDSPSTSKTKRKKVEKMET). Residues 115-136 (RAMETQPSKEDVVAGKRIRVEV) are compositionally biased toward basic and acidic residues. Positions 151–162 (KTKRKKVEKMET) are enriched in basic residues.

The protein belongs to the ZNF593/BUD20 C2H2-type zinc-finger protein family. In terms of assembly, associates with pre-60S ribosomal particles; released from the pre-60S particle very early in the cytoplasm.

It is found in the nucleus. Its subcellular location is the cytoplasm. Its function is as follows. Involved in pre-60S ribosomal particles maturation by promoting the nuclear export of the 60S ribosome. This is Zinc finger protein 593 homolog from Drosophila melanogaster (Fruit fly).